The following is a 340-amino-acid chain: rRNA adenine N-6-methyltransferase (340 aa).

Residues 1–25 (MAGPQDRPRGRGPSSGRPQRPVGGR) show a composition bias toward low complexity. Positions 1–37 (MAGPQDRPRGRGPSSGRPQRPVGGRSQRDRDRRVLGQ) are disordered. Residues Asn-38, Leu-40, Gly-65, Glu-86, Asp-111, and Ala-127 each contribute to the S-adenosyl-L-methionine site. Positions 284–340 (RGGAARGPGDQRGRRGRPGGGPRPDGRAGGGPRRDAGGRRTGDGRGGRPRPPRGGQA) are disordered. Positions 301–314 (PGGGPRPDGRAGGG) are enriched in gly residues. Positions 315-329 (PRRDAGGRRTGDGRG) are enriched in basic and acidic residues.

This sequence belongs to the class I-like SAM-binding methyltransferase superfamily. rRNA adenine N(6)-methyltransferase family.

Its function is as follows. Involved in erythromycin resistance. This is rRNA adenine N-6-methyltransferase (ermA) from Aeromicrobium erythreum (strain ATCC 51598 / DSM 8599 / JCM 8359 / NBRC 15406 / NRRL B-3381).